A 208-amino-acid chain; its full sequence is Uracil phosphoribosyltransferase (208 aa).

Residues R78, R103, and 130-138 (DPMLATGGS) contribute to the 5-phospho-alpha-D-ribose 1-diphosphate site. Residues I193 and 198 to 200 (GDA) contribute to the uracil site. D199 is a binding site for 5-phospho-alpha-D-ribose 1-diphosphate.

This sequence belongs to the UPRTase family. Mg(2+) serves as cofactor.

It catalyses the reaction UMP + diphosphate = 5-phospho-alpha-D-ribose 1-diphosphate + uracil. It participates in pyrimidine metabolism; UMP biosynthesis via salvage pathway; UMP from uracil: step 1/1. With respect to regulation, allosterically activated by GTP. Functionally, catalyzes the conversion of uracil and 5-phospho-alpha-D-ribose 1-diphosphate (PRPP) to UMP and diphosphate. The chain is Uracil phosphoribosyltransferase from Shewanella woodyi (strain ATCC 51908 / MS32).